Consider the following 394-residue polypeptide: Mitogen-activated protein kinase 2 (394 aa).

A compositionally biased stretch (gly residues) spans 1–31 (MRMEGGGGGGHGHHGGGGGGHGHHGGIGGGE). A disordered region spans residues 1–33 (MRMEGGGGGGHGHHGGGGGGHGHHGGIGGGEAQ). The Protein kinase domain maps to 61–347 (VPPIRPVGRG…VDEALCHPYL (287 aa)). Residues 67-75 (VGRGACGII) and lysine 90 each bind ATP. Aspartate 187 (proton acceptor) is an active-site residue. Tyrosine 221 carries the phosphotyrosine modification.

This sequence belongs to the protein kinase superfamily. CMGC Ser/Thr protein kinase family. MAP kinase subfamily. Post-translationally, the phosphorylation on Tyr-221 activates the enzyme. A conserved Thr, which must also be phosphorylated to activate the enzyme in closely related sequences, is replaced by Met-219 in this sequence.

The catalysed reaction is L-seryl-[protein] + ATP = O-phospho-L-seryl-[protein] + ADP + H(+). It catalyses the reaction L-threonyl-[protein] + ATP = O-phospho-L-threonyl-[protein] + ADP + H(+). The sequence is that of Mitogen-activated protein kinase 2 (MPK2) from Oryza sativa subsp. japonica (Rice).